Consider the following 501-residue polypeptide: Alpha-ketoglutarate-dependent dioxygenase FTO (501 aa).

The fe2OG dioxygenase domain stretch occupies residues 32–321; it reads SSKDDTFYDL…SSTHRVAESS (290 aa). Substrate-binding residues include Arg96 and Tyr108. Asn203 contributes to the 2-oxoglutarate binding site. The interval 211-222 is loop L1; predicted to block binding of double-stranded DNA or RNA; it reads SFLKEEPYFGMG. The Fe cation site is built by His229 and Asp231. 229-232 provides a ligand contact to substrate; sequence HHDE. Tyr289 lines the 2-oxoglutarate pocket. His301 contributes to the Fe cation binding site. Residues 310–312, Thr314, and Arg316 each bind 2-oxoglutarate; that span reads RFS.

Belongs to the fto family. As to quaternary structure, monomer. May also exist as homodimer. Fe(2+) is required as a cofactor.

It localises to the nucleus. It is found in the nucleus speckle. Its subcellular location is the cytoplasm. It catalyses the reaction a 5'-end (N(7)-methyl 5'-triphosphoguanosine)-(N(6),2'-O-dimethyladenosine) in mRNA + 2-oxoglutarate + O2 = a 5'-end (N(7)-methyl 5'-triphosphoguanosine)-(2'-O-methyladenosine) in mRNA + formaldehyde + succinate + CO2. It carries out the reaction an N(6)-methyladenosine in mRNA + 2-oxoglutarate + O2 = an adenosine in mRNA + formaldehyde + succinate + CO2. The enzyme catalyses N(6)-methyladenosine in U6 snRNA + 2-oxoglutarate + O2 = adenosine in U6 snRNA + formaldehyde + succinate + CO2. The catalysed reaction is a 5'-end (N(7)-methyl 5'-triphosphoguanosine)-(N(6),2'-O-dimethyladenosine) in U6 snRNA + 2-oxoglutarate + O2 = a 5'-end (N(7)-methyl 5'-triphosphoguanosine)-(2'-O-methyladenosine) in U6 snRNA + formaldehyde + succinate + CO2. It catalyses the reaction an N(1)-methyladenosine in tRNA + 2-oxoglutarate + O2 = an adenosine in tRNA + formaldehyde + succinate + CO2. Activated by ascorbate. Inhibited by N-oxalylglycine, fumarate and succinate. Its function is as follows. RNA demethylase that mediates oxidative demethylation of different RNA species, such as mRNAs, tRNAs and snRNAs, and acts as a regulator of fat mass, adipogenesis and energy homeostasis. Specifically demethylates N(6)-methyladenosine (m6A) RNA, the most prevalent internal modification of messenger RNA (mRNA) in higher eukaryotes. M6A demethylation by FTO affects mRNA expression and stability. Also able to demethylate m6A in U6 small nuclear RNA (snRNA). Mediates demethylation of N(6),2'-O-dimethyladenosine cap (m6A(m)), by demethylating the N(6)-methyladenosine at the second transcribed position of mRNAs and U6 snRNA. Demethylation of m6A(m) in the 5'-cap by FTO affects mRNA stability by promoting susceptibility to decapping. Also acts as a tRNA demethylase by removing N(1)-methyladenine from various tRNAs. The chain is Alpha-ketoglutarate-dependent dioxygenase FTO (fto) from Xenopus laevis (African clawed frog).